The following is a 1985-amino-acid chain: Histone-lysine N-methyltransferase SETD1B (1985 aa).

The segment covering 1–11 has biased composition (basic residues); sequence MENSHPHHHHQ. Residues 1 to 25 are disordered; sequence MENSHPHHHHQQPPPQPGPSGERRN. The tract at residues 67–97 is interaction with WDR82; it reads VEDPRVVGIWTKNKELELSVPKFKIDEFYVG. Residues 92 to 180 form the RRM domain; the sequence is DEFYVGPVPP…NIIHVELDTK (89 aa). 5 disordered regions span residues 234-304, 353-710, 955-1480, 1519-1624, and 1658-1687; these read GCGS…QDPT, GSSG…PPPA, VKRK…RTGP, QLPP…STKL, and RGPW…PQPL. Composition is skewed to polar residues over residues 242-258, 264-273, 281-304, and 353-365; these read VTPN…TAYS, TPNSYGQGTP, PFSQ…QDPT, and GSSG…QSQD. Positions 366-381 are enriched in low complexity; sequence ATTFAHTPPPAQTATA. Pro residues-rich tracts occupy residues 393-404, 423-433, and 440-449; these read TPAPPFPPPPEE, PAPPPLPPAEP, and GTPPGPPPPD. Basic and acidic residues predominate over residues 484–512; the sequence is EKPHDSLDSRIEMLLKEQRTKLPFLREQD. The span at 522–535 shows a compositional bias: low complexity; sequence SPISSSSSQLSPLS. Residues 583-594 are compositionally biased toward pro residues; it reads PRPPPEPGPPDP. Acidic residues predominate over residues 628–637; it reads EDMEISDDEM. Residues 650–669 are compositionally biased toward low complexity; that stretch reads PMVVTPGAGAVAAPNVLAPN. The segment covering 670 to 710 has biased composition (pro residues); that stretch reads LPLPPPPGFPPLPPPPPPPPPQPGFPMPPPLPPPPPPPPPA. 2 positions are modified to phosphoserine: Ser977 and Ser985. Positions 986–1006 are enriched in basic and acidic residues; the sequence is ERERDRDIADAPCELTKRDPK. Ser1022 is subject to Phosphoserine. Over residues 1032–1055 the composition is skewed to low complexity; it reads LSASSSSSASSSSGSSTTSPSSSA. Residues 1058 to 1083 are compositionally biased toward acidic residues; the sequence is KEEEDRESTEEEEEEEEEEAEEEEEE. Residues 1087–1097 are compositionally biased toward low complexity; it reads SRISSPSSSSS. Residues 1100-1120 show a composition bias toward acidic residues; that stretch reads KDDEDDNEADSDGQIDSDIDD. A compositionally biased stretch (low complexity) spans 1143 to 1178; it reads SITTSKAPAESSSSSSESSGSSEFESSSESESSSSS. Over residues 1179–1202 the composition is skewed to acidic residues; the sequence is SEDEEEMTVPGVEEEEEEEEEEEK. Over residues 1205–1217 the composition is skewed to low complexity; sequence AMAAATVVAMAEE. A compositionally biased stretch (acidic residues) spans 1247–1261; sequence GTEEEVDIEAEDEVP. Phosphoserine is present on residues Ser1283, Ser1301, and Ser1354. The span at 1331–1373 shows a compositional bias: pro residues; it reads EPPPMLSLPLQPPLPPPRLLRPPSPPPEPETPEPPKPPVPLEP. A compositionally biased stretch (low complexity) spans 1402–1442; the sequence is PGGEPPLSGSSSGLSLSSPQVPGSPFSYPSPSPGLSSGGLP. Basic residues predominate over residues 1535–1544; that stretch reads IKRKPGRPRR. Pro residues-rich tracts occupy residues 1600–1619 and 1678–1687; these read PAPP…PPPV and SPEPSPPQPL. 2 positions are modified to phosphoserine: Ser1678 and Ser1682. The WDR5 interaction motif (WIN) motif lies at 1764–1769; sequence GCARSE. Residues 1786 to 1819 form a disordered region; sequence SRASTDEPPMDTQGMSIPAQPHASTRAGSERRSE. The RxxxRR motif motif lies at 1817 to 1822; the sequence is RSEQRR. An SET domain is found at 1846 to 1963; sequence KKLKFCKSHI…VNEEITYDYK (118 aa). Tyr1962 provides a ligand contact to S-adenosyl-L-methionine. The region spanning 1969 to 1985 is the Post-SET domain; the sequence is VKIPCLCGSENCRGTLN.

Belongs to the class V-like SAM-binding methyltransferase superfamily. Component of the SET1B/COMPASS complex composed of the catalytic subunit SETD1B, WDR5, WDR82, RBBP5, ASH2L/ASH2, CXXC1/CFP1, HCFC1, DPY30 homotrimer and BOD1. Forms a core complex with the evolutionary conserved subcomplex WRAD composed of WDR5, RBBP5, ASH2L/ASH2 and DPY30 subunits; WRAD differentially stimulates the methyltransferase activity. Interacts with HCFC1 and ASH2L/ASH2. Interacts (via the RRM domain) with WDR82. Interacts (via the RRM domain) with hyperphosphorylated C-terminal domain (CTD) of RNA polymerase II large subunit (POLR2A) only in the presence of WDR82. Binds specifically to CTD heptad repeats phosphorylated on 'Ser-5' of each heptad. Interacts with RBM15. Interacts (via WIN motif) with WDR5. In terms of tissue distribution, widely expressed.

Its subcellular location is the nucleus. It is found in the nucleus speckle. The protein resides in the chromosome. It localises to the cytoplasm. It carries out the reaction L-lysyl(4)-[histone H3] + S-adenosyl-L-methionine = N(6)-methyl-L-lysyl(4)-[histone H3] + S-adenosyl-L-homocysteine + H(+). The enzyme catalyses N(6)-methyl-L-lysyl(4)-[histone H3] + S-adenosyl-L-methionine = N(6),N(6)-dimethyl-L-lysyl(4)-[histone H3] + S-adenosyl-L-homocysteine + H(+). The catalysed reaction is N(6),N(6)-dimethyl-L-lysyl(4)-[histone H3] + S-adenosyl-L-methionine = N(6),N(6),N(6)-trimethyl-L-lysyl(4)-[histone H3] + S-adenosyl-L-homocysteine + H(+). Its function is as follows. Histone methyltransferase that catalyzes methyl group transfer from S-adenosyl-L-methionine to the epsilon-amino group of 'Lys-4' of histone H3 (H3K4) via a non-processive mechanism. Part of chromatin remodeling machinery, forms H3K4me1, H3K4me2 and H3K4me3 methylation marks at active chromatin sites where transcription and DNA repair take place. Plays an essential role in regulating the transcriptional programming of multipotent hematopoietic progenitor cells and lymphoid lineage specification during hematopoiesis. This is Histone-lysine N-methyltransferase SETD1B (Setd1b) from Mus musculus (Mouse).